We begin with the raw amino-acid sequence, 708 residues long: Polyribonucleotide nucleotidyltransferase (708 aa).

The Mg(2+) site is built by D488 and D494. Residues 555 to 615 (PIIKVTKVDP…ENVDKAIELI (61 aa)) enclose the KH domain. Positions 625–692 (GEVLEGKVTR…DLGRLQFKRV (68 aa)) constitute an S1 motif domain.

It belongs to the polyribonucleotide nucleotidyltransferase family. Requires Mg(2+) as cofactor.

It localises to the cytoplasm. The enzyme catalyses RNA(n+1) + phosphate = RNA(n) + a ribonucleoside 5'-diphosphate. Involved in mRNA degradation. Catalyzes the phosphorolysis of single-stranded polyribonucleotides processively in the 3'- to 5'-direction. The polypeptide is Polyribonucleotide nucleotidyltransferase (Thermotoga petrophila (strain ATCC BAA-488 / DSM 13995 / JCM 10881 / RKU-1)).